A 544-amino-acid chain; its full sequence is NXPE family member 4 (544 aa).

The signal sequence occupies residues 1-27 (MKISMINYKSLLALLFILASWIIFTVF). N-linked (GlcNAc...) asparagine glycosylation is found at Asn-29, Asn-38, Asn-47, Asn-48, Asn-92, Asn-160, and Asn-210.

It belongs to the NXPE family.

The protein localises to the secreted. This is NXPE family member 4 (NXPE4) from Homo sapiens (Human).